A 160-amino-acid chain; its full sequence is Large ribosomal subunit protein uL22c (160 aa).

The protein belongs to the universal ribosomal protein uL22 family. In terms of assembly, part of the 50S ribosomal subunit.

Its subcellular location is the plastid. The protein resides in the chloroplast. In terms of biological role, this protein binds specifically to 23S rRNA. Its function is as follows. The globular domain of the protein is located near the polypeptide exit tunnel on the outside of the subunit, while an extended beta-hairpin is found that lines the wall of the exit tunnel in the center of the 70S ribosome. In Lepidium virginicum (Virginia pepperweed), this protein is Large ribosomal subunit protein uL22c (rpl22).